We begin with the raw amino-acid sequence, 386 residues long: Succinate--CoA ligase [ADP-forming] subunit beta (386 aa).

The ATP-grasp domain occupies 9–244; sequence KALLRAAGIK…TTQEDHRETQ (236 aa). ATP is bound by residues lysine 46, 53-55, glutamate 100, and arginine 103; that span reads GRG. Positions 199 and 213 each coordinate Mg(2+). Substrate contacts are provided by residues asparagine 264 and 321 to 323; that span reads GIV.

Belongs to the succinate/malate CoA ligase beta subunit family. In terms of assembly, heterotetramer of two alpha and two beta subunits. Requires Mg(2+) as cofactor.

The enzyme catalyses succinate + ATP + CoA = succinyl-CoA + ADP + phosphate. The catalysed reaction is GTP + succinate + CoA = succinyl-CoA + GDP + phosphate. The protein operates within carbohydrate metabolism; tricarboxylic acid cycle; succinate from succinyl-CoA (ligase route): step 1/1. Its function is as follows. Succinyl-CoA synthetase functions in the citric acid cycle (TCA), coupling the hydrolysis of succinyl-CoA to the synthesis of either ATP or GTP and thus represents the only step of substrate-level phosphorylation in the TCA. The beta subunit provides nucleotide specificity of the enzyme and binds the substrate succinate, while the binding sites for coenzyme A and phosphate are found in the alpha subunit. The protein is Succinate--CoA ligase [ADP-forming] subunit beta of Dichelobacter nodosus (strain VCS1703A).